Reading from the N-terminus, the 335-residue chain is Biotin synthase (335 aa).

The region spanning 51-278 is the Radical SAM core domain; sequence NTVQLSSLLS…LAKVRLSAGR (228 aa). 3 residues coordinate [4Fe-4S] cluster: Cys66, Cys70, and Cys73. Residues Cys110, Cys141, Cys201, and Arg273 each coordinate [2Fe-2S] cluster.

It belongs to the radical SAM superfamily. Biotin synthase family. As to quaternary structure, homodimer. [4Fe-4S] cluster serves as cofactor. It depends on [2Fe-2S] cluster as a cofactor.

The catalysed reaction is (4R,5S)-dethiobiotin + (sulfur carrier)-SH + 2 reduced [2Fe-2S]-[ferredoxin] + 2 S-adenosyl-L-methionine = (sulfur carrier)-H + biotin + 2 5'-deoxyadenosine + 2 L-methionine + 2 oxidized [2Fe-2S]-[ferredoxin]. Its pathway is cofactor biosynthesis; biotin biosynthesis; biotin from 7,8-diaminononanoate: step 2/2. Its function is as follows. Catalyzes the conversion of dethiobiotin (DTB) to biotin by the insertion of a sulfur atom into dethiobiotin via a radical-based mechanism. In Bordetella bronchiseptica (strain ATCC BAA-588 / NCTC 13252 / RB50) (Alcaligenes bronchisepticus), this protein is Biotin synthase.